Reading from the N-terminus, the 478-residue chain is Zinc finger protein 410 (478 aa).

Disordered regions lie at residues 84 to 113 (PDGEETRAQTVQKSPEFLTTPESPSLLQDL) and 187 to 214 (NAKTGSNGENVHLGSGDGQPKDSGPLPQ). Over residues 103-113 (TPESPSLLQDL) the composition is skewed to polar residues. 5 consecutive C2H2-type zinc fingers follow at residues 219 to 243 (LKCTVEGCDRTFVWPAHFKYHLKTH), 249 to 273 (FICPAEGCGKSFYVLQRLKVHMRTH), 279 to 303 (FMCHESGCGKQFTTAGNLKNHRRIH), 309 to 333 (FLCEAQGCGRSFAEYSSLRKHLVVH), and 339 to 362 (HQCQVCGKTFSQSGSRNVHMRKHH). The Zn(2+) site is built by C221, C226, H239, H243, C251, C256, H269, H273, C281, C286, H299, H303, C311, C316, H329, H333, C341, C344, H357, and H361.

Interacts with CDKN2A/p14ARF. O-glycosylated. O-GlcNAcylation may occur in response to increasing glucose levels and affect transcription factor activity. Post-translationally, sumoylated. Sumoylation increases its half-life, possibly by blocking ubiquitin-mediated degradation.

It localises to the nucleus. The protein localises to the chromosome. Functionally, transcription factor that binds to the sequence motif 5'-CATCCCATAATA-3', and is specifically required to silence expression of fetal hemoglobin in adult erythroid cells. Prevents expression of fetal hemoglobin genes HBG1 and HBG2 through CHD4: acts as a direct transcriptional activator of CHD4, a central component of the NuRD complex that represses transcription of fetal hemoglobin genes HBG1 and HBG2 in erythroid cells. May also activate transcription of matrix-remodeling genes such as MMP1 during fibroblast senescence. May activate transcription of the gap junction gene GJC1, perhaps in response to increasing glucose. However, recent studies suggest that ZNF410 is dedicated to regulate expression of a single gene: CHD4. This is Zinc finger protein 410 from Mus musculus (Mouse).